Consider the following 347-residue polypeptide: GMP reductase (347 aa).

Residue Ala108–Ala131 coordinates NADP(+). Positions 181 and 183 each coordinate K(+). The active-site Thioimidate intermediate is Cys186. Ile216–Val239 contacts NADP(+).

This sequence belongs to the IMPDH/GMPR family. GuaC type 1 subfamily. In terms of assembly, homotetramer.

The enzyme catalyses IMP + NH4(+) + NADP(+) = GMP + NADPH + 2 H(+). Its function is as follows. Catalyzes the irreversible NADPH-dependent deamination of GMP to IMP. It functions in the conversion of nucleobase, nucleoside and nucleotide derivatives of G to A nucleotides, and in maintaining the intracellular balance of A and G nucleotides. The chain is GMP reductase from Aliivibrio salmonicida (strain LFI1238) (Vibrio salmonicida (strain LFI1238)).